The sequence spans 663 residues: Spore germination protein GerIA (663 aa).

A compositionally biased stretch (basic residues) spans 1-13; that stretch reads MIWNWLRKKKKSN. The segment at 1–175 is disordered; that stretch reads MIWNWLRKKK…SGGNSIYDFT (175 aa). Over residues 47-56 the composition is skewed to basic and acidic residues; sequence KNNEQKDSSQ. Low complexity-rich tracts occupy residues 57-72, 88-101, and 122-150; these read DKQQ…QDKQ and PKQG…QQSA. 5 helical membrane passes run 414–434, 451–471, 491–511, 541–561, and 578–598; these read IFVD…DFFI, ILRL…VAVL, AQVP…IDLL, AGLT…ASFI, and FLAF…IFLF.

It belongs to the GerABKA family.

It is found in the cell membrane. Its function is as follows. Required for inosine germination. The protein is Spore germination protein GerIA (gerIA) of Bacillus cereus.